Reading from the N-terminus, the 120-residue chain is MAWYHQHRWHLDYSIPRQNLQAFLTTITFIDPQFKIQENGLTEGEYKTQIVKQIIPQLCRIPNQNSPPPIWVQGPRIKGDPTWLKINAKFITELIPKQKGTKNISTKTYLSRLFVIWLQN.

The protein localises to the host mitochondrion. In terms of biological role, induces alteration of mitochondrial function that results in apoptosis contributing to tumor regression. The polypeptide is Protein ORF-C (orfC) (Walleye dermal sarcoma virus (WDSV)).